The sequence spans 154 residues: 6,7-dimethyl-8-ribityllumazine synthase (154 aa).

5-amino-6-(D-ribitylamino)uracil is bound by residues Phe22, 56-58 (AFE), and 80-82 (AVI). A (2S)-2-hydroxy-3-oxobutyl phosphate-binding site is contributed by 85 to 86 (ST). His88 functions as the Proton donor in the catalytic mechanism. 5-amino-6-(D-ribitylamino)uracil is bound at residue Phe113. (2S)-2-hydroxy-3-oxobutyl phosphate is bound at residue Arg127.

The protein belongs to the DMRL synthase family.

The catalysed reaction is (2S)-2-hydroxy-3-oxobutyl phosphate + 5-amino-6-(D-ribitylamino)uracil = 6,7-dimethyl-8-(1-D-ribityl)lumazine + phosphate + 2 H2O + H(+). It functions in the pathway cofactor biosynthesis; riboflavin biosynthesis; riboflavin from 2-hydroxy-3-oxobutyl phosphate and 5-amino-6-(D-ribitylamino)uracil: step 1/2. In terms of biological role, catalyzes the formation of 6,7-dimethyl-8-ribityllumazine by condensation of 5-amino-6-(D-ribitylamino)uracil with 3,4-dihydroxy-2-butanone 4-phosphate. This is the penultimate step in the biosynthesis of riboflavin. This chain is 6,7-dimethyl-8-ribityllumazine synthase, found in Clostridium kluyveri (strain NBRC 12016).